Consider the following 222-residue polypeptide: Ribonuclease 3 (222 aa).

The first 19 residues, 1-19 (MKFFIFILALQQLYVQSFA), serve as a signal peptide directing secretion. Glutamine 30 serves as a coordination point for RNA. Cysteine 36 and cysteine 42 are joined by a disulfide. RNA-binding positions include histidine 57, phenylalanine 107, 110–111 (HE), and 114–115 (KH). Histidine 57 (proton donor) is an active-site residue. Cystine bridges form between cysteine 72–cysteine 118, cysteine 178–cysteine 213, and cysteine 194–cysteine 205. Residue glutamate 111 is part of the active site. Histidine 115 acts as the Proton acceptor in catalysis.

This sequence belongs to the RNase T2 family.

It catalyses the reaction a ribonucleotidyl-ribonucleotide-RNA + H2O = a 3'-end 3'-phospho-ribonucleotide-RNA + a 5'-end dephospho-ribonucleoside-RNA + H(+). Its function is as follows. May remobilize phosphate, particularly when cells senesce or when phosphate becomes limiting. This is Ribonuclease 3 (RNS3) from Arabidopsis thaliana (Mouse-ear cress).